Here is a 152-residue protein sequence, read N- to C-terminus: Catabolic 3-dehydroquinase 1 (152 aa).

Residue Y24 is the Proton acceptor of the active site. The substrate site is built by N75, H81, and D88. H101 acts as the Proton donor in catalysis. Substrate is bound by residues 102–103 (VS) and R112.

This sequence belongs to the type-II 3-dehydroquinase family. As to quaternary structure, homododecamer. Adopts a ring-like structure, composed of an arrangement of two hexameric rings stacked on top of one another.

The catalysed reaction is 3-dehydroquinate = 3-dehydroshikimate + H2O. It participates in aromatic compound metabolism; 3,4-dihydroxybenzoate biosynthesis; 3,4-dihydroxybenzoate from 3-dehydroquinate: step 1/2. In terms of biological role, is involved in the catabolism of quinate. Allows the utilization of quinate as carbon source via the beta-ketoadipate pathway. This Aspergillus terreus (strain NIH 2624 / FGSC A1156) protein is Catabolic 3-dehydroquinase 1.